A 303-amino-acid chain; its full sequence is MCHGRIAPKSTSVFAVASVGHGVFLPLVILCTLLGDGLASVCPLPPEPENGGYICHPRPCRDPLTAGSVIEYLCAEGYMLKGDYKYLTCKNGEWKPAMEISCRLNEDKDTHTSLGVPTLSIVASTASSVALILLLVVLFVLLQPKLKSFHHSRRDQGVSGDQVSIMVDGVQVALPSYEEAVYGSSGHCVPPADPRVQIVLSEGSGPSGRSVPREQQLPDQGACSSAGGEDEAPGQSGLCEAWGSRASETVMVHQATTSSWVAGSGNRQLAHKETADSENSDIQSLLSLTSEEYTDDIPLLKEA.

Residues 1–39 form the signal peptide; it reads MCHGRIAPKSTSVFAVASVGHGVFLPLVILCTLLGDGLA. A Sushi domain is found at 40 to 104; that stretch reads SVCPLPPEPE…KPAMEISCRL (65 aa). The Extracellular segment spans residues 40-120; it reads SVCPLPPEPE…HTSLGVPTLS (81 aa). Cystine bridges form between Cys-42–Cys-89 and Cys-74–Cys-102. The chain crosses the membrane as a helical span at residues 121–141; the sequence is IVASTASSVALILLLVVLFVL. The Cytoplasmic portion of the chain corresponds to 142 to 303; the sequence is LQPKLKSFHH…TDDIPLLKEA (162 aa). Disordered regions lie at residues 199 to 237 and 263 to 282; these read VLSE…GQSG and GSGN…NSDI.

It is found in the membrane. Functionally, may play a role in growth-suppressive activity and cell death. May be involved in the production of chemokine molecules in umbilical vein endothelial cells (HUVECs) cultured in THP1 monocyte LPS-induced medium. Plays a role in preventing tumor onset. The sequence is that of Sushi domain-containing protein 6 from Homo sapiens (Human).